The primary structure comprises 421 residues: Histidine--tRNA ligase (421 aa).

It belongs to the class-II aminoacyl-tRNA synthetase family. As to quaternary structure, homodimer.

It is found in the cytoplasm. It catalyses the reaction tRNA(His) + L-histidine + ATP = L-histidyl-tRNA(His) + AMP + diphosphate + H(+). The protein is Histidine--tRNA ligase of Alkaliphilus oremlandii (strain OhILAs) (Clostridium oremlandii (strain OhILAs)).